The following is a 205-amino-acid chain: Protein GrpE (205 aa).

Residues 172–205 (KGSTGPGAPAEPAAAPNPYASNGADTGGSFDTKA) are disordered. A compositionally biased stretch (low complexity) spans 177 to 195 (PGAPAEPAAAPNPYASNGA).

The protein belongs to the GrpE family. As to quaternary structure, homodimer.

Its subcellular location is the cytoplasm. Functionally, participates actively in the response to hyperosmotic and heat shock by preventing the aggregation of stress-denatured proteins, in association with DnaK and GrpE. It is the nucleotide exchange factor for DnaK and may function as a thermosensor. Unfolded proteins bind initially to DnaJ; upon interaction with the DnaJ-bound protein, DnaK hydrolyzes its bound ATP, resulting in the formation of a stable complex. GrpE releases ADP from DnaK; ATP binding to DnaK triggers the release of the substrate protein, thus completing the reaction cycle. Several rounds of ATP-dependent interactions between DnaJ, DnaK and GrpE are required for fully efficient folding. The sequence is that of Protein GrpE from Caulobacter sp. (strain K31).